Reading from the N-terminus, the 270-residue chain is L-fucose dehydrogenase (270 aa).

NAD(+) contacts are provided by arginine 19, isoleucine 21, aspartate 40, lysine 41, aspartate 62, valine 63, asparagine 89, tyrosine 154, lysine 158, isoleucine 187, threonine 189, and leucine 191.

This sequence belongs to the short-chain dehydrogenases/reductases (SDR) family.

The enzyme catalyses L-fucose + NAD(+) = L-fucono-1,5-lactone + NADH + H(+). It carries out the reaction D-arabinose + NAD(+) = D-arabinono-1,5-lactone + NADH + H(+). The catalysed reaction is L-galactose + NAD(+) = L-galactono-1,5-lactone + NADH + H(+). In terms of biological role, catalyzes the NAD(+)-dependent oxidation of L-fucose, yielding L-fucono-1,5-lactone, which rapidly converts spontaneously to L-fucone-1,4-lactone. Does not use NADPH. Displays low activity on L-fucose, D-arabinose and L-galactose compared with rabbit and human. This is consitent with the low L-fucose metabolism observed in this species. In Rattus norvegicus (Rat), this protein is L-fucose dehydrogenase (Hsd17b14).